Here is a 173-residue protein sequence, read N- to C-terminus: CKLF-like MARVEL transmembrane domain-containing protein 8 (173 aa).

The MARVEL domain maps to 36–168 (FLRTLPGLLI…NTYFSFIAWR (133 aa)). 4 consecutive transmembrane segments (helical) span residues 40-60 (LPGLLIVAEIVLGLLVWTLIA), 70-90 (FGWVMFVAVFYWVLTVFFLII), 105-125 (TTVGLWFNGSAFALYLSAAIV), and 147-167 (FFAFLVTICYAGNTYFSFIAW).

It belongs to the chemokine-like factor family.

The protein resides in the membrane. The sequence is that of CKLF-like MARVEL transmembrane domain-containing protein 8 (CMTM8) from Bos taurus (Bovine).